A 91-amino-acid chain; its full sequence is UPF0386 protein CC_0226 (91 aa).

Belongs to the UPF0386 family.

The protein is UPF0386 protein CC_0226 of Caulobacter vibrioides (strain ATCC 19089 / CIP 103742 / CB 15) (Caulobacter crescentus).